Reading from the N-terminus, the 104-residue chain is Large ribosomal subunit protein bL21 (104 aa).

It belongs to the bacterial ribosomal protein bL21 family. In terms of assembly, part of the 50S ribosomal subunit. Contacts protein L20.

This protein binds to 23S rRNA in the presence of protein L20. The chain is Large ribosomal subunit protein bL21 from Streptococcus uberis (strain ATCC BAA-854 / 0140J).